The primary structure comprises 55 residues: Large ribosomal subunit protein bL33 (55 aa).

The protein belongs to the bacterial ribosomal protein bL33 family.

This is Large ribosomal subunit protein bL33 from Acidiphilium cryptum (strain JF-5).